The primary structure comprises 438 residues: V-type ATP synthase beta chain (438 aa).

Belongs to the ATPase alpha/beta chains family.

Functionally, produces ATP from ADP in the presence of a proton gradient across the membrane. The V-type beta chain is a regulatory subunit. This chain is V-type ATP synthase beta chain, found in Protochlamydia amoebophila (strain UWE25).